A 347-amino-acid chain; its full sequence is Selenide, water dikinase (347 aa).

Selenocysteine 17 is an active-site residue. Residue selenocysteine 17 is a non-standard amino acid, selenocysteine. ATP is bound by residues lysine 20 and 48–50 (TAD). Residue aspartate 51 participates in Mg(2+) binding. Residues aspartate 68, aspartate 91, and 139 to 141 (GHS) each bind ATP. Mg(2+) is bound at residue aspartate 91. Aspartate 227 serves as a coordination point for Mg(2+).

The protein belongs to the selenophosphate synthase 1 family. Class I subfamily. In terms of assembly, homodimer. Mg(2+) serves as cofactor.

The catalysed reaction is hydrogenselenide + ATP + H2O = selenophosphate + AMP + phosphate + 2 H(+). In terms of biological role, synthesizes selenophosphate from selenide and ATP. The sequence is that of Selenide, water dikinase from Haemophilus influenzae (strain 86-028NP).